The sequence spans 314 residues: MMLLGASLYLNNTQEVSDEIDTANLYANWKMKYNRRYTSQRDEMYRFKVFSDNLNYIRAFQDSTESATYTLELNQFADMSQQEFASTYLSLRVPKTAKLNASNANFQYKGAEVDWTDNKKVKYPAVKNQGSCGSCWAFSAVGALEINTDIELNKKYELSEQDLVDCSGPYDNEGCNGGWMDSAFEYVADNGLAEAKDYPYTAKDGTCKTSVKRPYTHVQGFTDIDSCDELAQAIQERTVSVAVDANPWQFYRSGVLSKCTKNLNHGVVLVGVQADGAWKIRNSWGSSWGEAGHIRLAGGDTCGICAAPSFPILG.

The N-terminal stretch at 1–24 (MMLLGASLYLNNTQEVSDEIDTAN) is a signal peptide. A propeptide spans 25-109 (LYANWKMKYN…NASNANFQYK (85 aa)) (activation peptide). Intrachain disulfides connect Cys-132–Cys-175, Cys-166–Cys-207, and Cys-259–Cys-302. Residue Cys-135 is part of the active site. Catalysis depends on residues His-265 and Asn-282.

The protein belongs to the peptidase C1 family.

It is found in the secreted. It carries out the reaction Specificity close to that of papain. As compared to cathepsin B, cathepsin L exhibits higher activity toward protein substrates, but has little activity on Z-Arg-Arg-NHMec, and no peptidyl-dipeptidase activity.. Its function is as follows. May be involved in extracellular digestion. The polypeptide is Cathepsin L 2 (Paramecium tetraurelia).